The sequence spans 127 residues: 3-aminoacrylate deaminase RutC (127 aa).

The protein belongs to the RutC family.

It catalyses the reaction (Z)-3-aminoacrylate + H2O + H(+) = 3-oxopropanoate + NH4(+). Involved in pyrimidine catabolism. Catalyzes the deamination of 3-aminoacrylate to malonic semialdehyde, a reaction that can also occur spontaneously. RutC may facilitate the reaction and modulate the metabolic fitness, rather than catalyzing essential functions. This Pseudomonas syringae pv. syringae (strain B728a) protein is 3-aminoacrylate deaminase RutC.